Consider the following 693-residue polypeptide: Elongation factor G 1 (693 aa).

One can recognise a tr-type G domain in the interval 4–281; the sequence is NKLRNIGISA…AVTRFLPSPH (278 aa). Residues 13 to 20, 80 to 84, and 134 to 137 contribute to the GTP site; these read AHIDSGKT, DTPGH, and NKCD.

It belongs to the TRAFAC class translation factor GTPase superfamily. Classic translation factor GTPase family. EF-G/EF-2 subfamily.

It localises to the cytoplasm. Functionally, catalyzes the GTP-dependent ribosomal translocation step during translation elongation. During this step, the ribosome changes from the pre-translocational (PRE) to the post-translocational (POST) state as the newly formed A-site-bound peptidyl-tRNA and P-site-bound deacylated tRNA move to the P and E sites, respectively. Catalyzes the coordinated movement of the two tRNA molecules, the mRNA and conformational changes in the ribosome. The chain is Elongation factor G 1 from Borrelia garinii subsp. bavariensis (strain ATCC BAA-2496 / DSM 23469 / PBi) (Borreliella bavariensis).